A 379-amino-acid chain; its full sequence is MKFFTALAAVGALLAPALALPTPASEEASHNQTLSVRLVPAGHTMVRAIVTNNGERPLHLLSFNTILDEDPTSKVEVFHESGDEAEFLGMLPRYDLSDLTEDLFTRLAPKDSVEHLFDIATVHDLKWDGKYTLAARGAIPVAEDGGTTIIDHVYYESNELDMEIDARKAAMVPRAFDDYFSKSLDKRRPLDICNPRKERDLRAALEGAQQVAKEAAAAAQNNTEKVFEFFRARDPGTRKEVSQHLSSISRAATKDGSSVTWFCSDGPGRCGPRTIAYTFPAKNEVHPCPLFWQMPHVNNKCHRQDRVGTVIHEGAHNPSVVTPYCKDLGYGYNRATGLTSQRAKRNADNYALFAMARQLVFCLLHLFVALPFIYIFASF.

The first 19 residues, 1–19 (MKFFTALAAVGALLAPALA), serve as a signal peptide directing secretion. Positions 20–187 (LPTPASEEAS…DYFSKSLDKR (168 aa)) are excised as a propeptide. 2 disulfides stabilise this stretch: C193–C263 and C270–C288. An N-linked (GlcNAc...) asparagine glycan is attached at N221. Position 312 (H312) interacts with Zn(2+). Residue E313 is part of the active site. Residues H316 and D327 each coordinate Zn(2+).

This sequence belongs to the peptidase M35 family. Requires Zn(2+) as cofactor.

It is found in the secreted. It catalyses the reaction Preferential cleavage of bonds with hydrophobic residues in P1'. Also 3-Asn-|-Gln-4 and 8-Gly-|-Ser-9 bonds in insulin B chain.. Its function is as follows. Secreted metalloproteinase that allows assimilation of proteinaceous substrates. Shows high activities on basic nuclear substrates such as histone and protamine. May be involved in virulence. This is Neutral protease 2 homolog TRV_03208 from Trichophyton verrucosum (strain HKI 0517).